The following is a 493-amino-acid chain: Glutamyl-tRNA(Gln) amidotransferase subunit A (493 aa).

Active-site charge relay system residues include Lys-79 and Ser-159. The active-site Acyl-ester intermediate is Ser-183.

The protein belongs to the amidase family. GatA subfamily. In terms of assembly, heterotrimer of A, B and C subunits.

It catalyses the reaction L-glutamyl-tRNA(Gln) + L-glutamine + ATP + H2O = L-glutaminyl-tRNA(Gln) + L-glutamate + ADP + phosphate + H(+). Its function is as follows. Allows the formation of correctly charged Gln-tRNA(Gln) through the transamidation of misacylated Glu-tRNA(Gln) in organisms which lack glutaminyl-tRNA synthetase. The reaction takes place in the presence of glutamine and ATP through an activated gamma-phospho-Glu-tRNA(Gln). The protein is Glutamyl-tRNA(Gln) amidotransferase subunit A of Brucella suis (strain ATCC 23445 / NCTC 10510).